Consider the following 158-residue polypeptide: S-ribosylhomocysteine lyase (158 aa).

The Fe cation site is built by H56, H60, and C125.

It belongs to the LuxS family. As to quaternary structure, homodimer. Fe cation serves as cofactor.

It carries out the reaction S-(5-deoxy-D-ribos-5-yl)-L-homocysteine = (S)-4,5-dihydroxypentane-2,3-dione + L-homocysteine. Functionally, involved in the synthesis of autoinducer 2 (AI-2) which is secreted by bacteria and is used to communicate both the cell density and the metabolic potential of the environment. The regulation of gene expression in response to changes in cell density is called quorum sensing. Catalyzes the transformation of S-ribosylhomocysteine (RHC) to homocysteine (HC) and 4,5-dihydroxy-2,3-pentadione (DPD). This is S-ribosylhomocysteine lyase from Leuconostoc mesenteroides subsp. mesenteroides (strain ATCC 8293 / DSM 20343 / BCRC 11652 / CCM 1803 / JCM 6124 / NCDO 523 / NBRC 100496 / NCIMB 8023 / NCTC 12954 / NRRL B-1118 / 37Y).